Consider the following 394-residue polypeptide: Phosphorylated adapter RNA export protein (394 aa).

The segment covering 1-18 (MALEVGDMEDGQLSDSDS) has biased composition (acidic residues). The tract at residues 1–33 (MALEVGDMEDGQLSDSDSDMTVAPSDRPLQLPK) is disordered. Alanine 2 carries the N-acetylalanine modification. The tract at residues 2–329 (ALEVGDMEDG…KAARKRRTQV (328 aa)) is necessary for interaction with CBP80. Phosphoserine occurs at positions 14, 16, 65, 66, 69, and 73. The short motif at 81 to 84 (KRKR) is the Nuclear localization signal element. Positions 83–111 (KRQKCFNPPPKPEPFQFGQSSQKPPVAGG) are disordered. Positions 130-139 (VATELGILGM) match the Nuclear export signal motif. Over residues 183-193 (KKMGSKEEENG) the composition is skewed to basic and acidic residues. Positions 183 to 211 (KKMGSKEEENGQGHLKRKRPVKDRLGNRP) are disordered. A Nuclear localization signal motif is present at residues 198–201 (KRKR). At serine 226 the chain carries Phosphoserine. The interval 228–328 (EKVADEISFR…KKAARKRRTQ (101 aa)) is sufficient for poly U RNA-binding. Positions 279 to 287 (GSRRRTPGG) are necessary for poly U RNA-binding and snRNA export. A Phosphothreonine modification is found at threonine 296. Serine 356 and serine 368 each carry phosphoserine.

The protein belongs to the PHAX family. As to quaternary structure, found in a U snRNA export complex with PHAX/RNUXA, NCBP1/CBP80, NCBP2/CBP20, RAN, XPO1 and m7G-capped RNA. Part of a precomplex with PHAX/RNUXA, NCBP1/CBP80, NCBP2/CBP20 and m7G-capped RNA. Interacts with NCBP1/CBP80. Found in a complex with snoRNA. Interacts with NCBP2/CBP20. Interacts with DDX39A; this interaction stimulates PHAX RNA binding activity. Post-translationally, phosphorylated in the nucleus. Dephosphorylated in the cytoplasm.

The protein localises to the nucleus. Its subcellular location is the nucleoplasm. It is found in the cajal body. The protein resides in the cytoplasm. A phosphoprotein adapter involved in the XPO1-mediated U snRNA export from the nucleus. Bridge components required for U snRNA export, the cap binding complex (CBC)-bound snRNA on the one hand and the GTPase Ran in its active GTP-bound form together with the export receptor XPO1 on the other. Its phosphorylation in the nucleus is required for U snRNA export complex assembly and export, while its dephosphorylation in the cytoplasm causes export complex disassembly. It is recycled back to the nucleus via the importin alpha/beta heterodimeric import receptor. The directionality of nuclear export is thought to be conferred by an asymmetric distribution of the GTP- and GDP-bound forms of Ran between the cytoplasm and nucleus. Its compartmentalized phosphorylation cycle may also contribute to the directionality of export. Binds strongly to m7G-capped U1 and U5 small nuclear RNAs (snRNAs) in a sequence-unspecific manner and phosphorylation-independent manner. Also plays a role in the biogenesis of U3 small nucleolar RNA (snoRNA). Involved in the U3 snoRNA transport from nucleoplasm to Cajal bodies. Binds strongly to m7G-capped U3, U8 and U13 precursor snoRNAs and weakly to trimethylated (TMG)-capped U3, U8 and U13 snoRNAs. Also binds to telomerase RNA. The protein is Phosphorylated adapter RNA export protein (PHAX) of Homo sapiens (Human).